Here is a 309-residue protein sequence, read N- to C-terminus: tRNA uridine(34) hydroxylase (309 aa).

One can recognise a Rhodanese domain in the interval 130-225 (RGEEVVFFDG…YGEKYGNDGL (96 aa)). C185 functions as the Cysteine persulfide intermediate in the catalytic mechanism.

The protein belongs to the TrhO family.

It catalyses the reaction uridine(34) in tRNA + AH2 + O2 = 5-hydroxyuridine(34) in tRNA + A + H2O. Catalyzes oxygen-dependent 5-hydroxyuridine (ho5U) modification at position 34 in tRNAs. The chain is tRNA uridine(34) hydroxylase from Corynebacterium aurimucosum (strain ATCC 700975 / DSM 44827 / CIP 107346 / CN-1) (Corynebacterium nigricans).